A 294-amino-acid polypeptide reads, in one-letter code: Nucleotide-binding protein LVIS_0651 (294 aa).

An ATP-binding site is contributed by 12 to 19 (GMSGAGKT). Residue 62–65 (DLRS) participates in GTP binding.

The protein belongs to the RapZ-like family.

In terms of biological role, displays ATPase and GTPase activities. The polypeptide is Nucleotide-binding protein LVIS_0651 (Levilactobacillus brevis (strain ATCC 367 / BCRC 12310 / CIP 105137 / JCM 1170 / LMG 11437 / NCIMB 947 / NCTC 947) (Lactobacillus brevis)).